The following is a 288-amino-acid chain: ATP phosphoribosyltransferase (288 aa).

The protein belongs to the ATP phosphoribosyltransferase family. Long subfamily. Mg(2+) is required as a cofactor.

The protein localises to the cytoplasm. It catalyses the reaction 1-(5-phospho-beta-D-ribosyl)-ATP + diphosphate = 5-phospho-alpha-D-ribose 1-diphosphate + ATP. The protein operates within amino-acid biosynthesis; L-histidine biosynthesis; L-histidine from 5-phospho-alpha-D-ribose 1-diphosphate: step 1/9. Feedback inhibited by histidine. Catalyzes the condensation of ATP and 5-phosphoribose 1-diphosphate to form N'-(5'-phosphoribosyl)-ATP (PR-ATP). Has a crucial role in the pathway because the rate of histidine biosynthesis seems to be controlled primarily by regulation of HisG enzymatic activity. The sequence is that of ATP phosphoribosyltransferase from Methanococcus maripaludis (strain DSM 14266 / JCM 13030 / NBRC 101832 / S2 / LL).